The sequence spans 710 residues: Interferon-induced GTP-binding protein Mx2 (710 aa).

The segment at 1–87 (MSLSFRPLKY…RSKGPENNLY (87 aa)) is disordered. 2 stretches are compositionally biased toward polar residues: residues 39–50 (QTMSPPQWQVEE) and 58–79 (NNFS…QQRS). Residues 112–383 (DLALPAIAVI…LIWHINKSLP (272 aa)) enclose the Dynamin-type G domain. The interval 122–129 (GDQSSGKS) is G1 motif. 122–129 (GDQSSGKS) is a binding site for GTP. Positions 147 to 149 (ITR) are G2 motif. The tract at residues 221–224 (DLPG) is G3 motif. Residues 221 to 225 (DLPGI) and 290 to 293 (TKPD) each bind GTP. The interval 290–293 (TKPD) is G4 motif. Residues 322–325 (KCRG) are G5 motif. The GED domain maps to 619-710 (IVEIGVHLNA…ALYEFPHFKG (92 aa)).

Belongs to the TRAFAC class dynamin-like GTPase superfamily. Dynamin/Fzo/YdjA family.

It is found in the cytoplasm. It localises to the nucleus. Interferon-induced dynamin-like GTPase with antiviral activity against vesicular stomatitis virus (VSV). In Bubalus bubalis (Domestic water buffalo), this protein is Interferon-induced GTP-binding protein Mx2 (MX2).